The following is a 443-amino-acid chain: Immediate-early protein ICP-46 homolog (443 aa).

Residues 82 to 110 (EFSEHEQEELKEKMAQLNHCLEDCELDYS) are a coiled coil.

This sequence belongs to the IIV-6 393L family.

The sequence is that of Immediate-early protein ICP-46 homolog from Aedes vexans (Inland floodwater mosquito).